Reading from the N-terminus, the 132-residue chain is Small ribosomal subunit protein uS8 (132 aa).

It belongs to the universal ribosomal protein uS8 family. As to quaternary structure, part of the 30S ribosomal subunit. Contacts proteins S5 and S12.

In terms of biological role, one of the primary rRNA binding proteins, it binds directly to 16S rRNA central domain where it helps coordinate assembly of the platform of the 30S subunit. This Rhizobium rhizogenes (strain K84 / ATCC BAA-868) (Agrobacterium radiobacter) protein is Small ribosomal subunit protein uS8.